A 946-amino-acid polypeptide reads, in one-letter code: DNA primase (946 aa).

The segment at 596–626 (RDTEEDEDGKEDKNNVPDNGVFQKTTSSVDT) is disordered. A compositionally biased stretch (polar residues) spans 617–626 (FQKTTSSVDT). A CHC2-type zinc finger spans residues 881–920 (CLNYTHRNPQETVQVFIDLRTEHSYALWASLWSRCFTKKC).

Belongs to the herpesviridae DNA primase family. Associates with the helicase and the primase-associated factor to form the helicase-primase factor.

The protein resides in the host nucleus. Functionally, essential component of the helicase/primase complex. Unwinds the DNA at the replication forks and generates single-stranded DNA for both leading and lagging strand synthesis. The primase initiates primer synthesis and thereby produces large amount of short RNA primers on the lagging strand that the polymerase elongates using dNTPs. The polypeptide is DNA primase (UL70) (Human cytomegalovirus (strain AD169) (HHV-5)).